The following is a 441-amino-acid chain: Cytochrome c biogenesis protein Ccs1 (441 aa).

The next 3 helical transmembrane spans lie at 19-39 (LKLA…GTVI), 78-98 (TWWF…CTLA), and 164-184 (IGPI…LLGN).

Belongs to the Ccs1/CcsB family. In terms of assembly, may interact with CcsA.

The protein localises to the plastid. The protein resides in the chloroplast thylakoid membrane. Required during biogenesis of c-type cytochromes (cytochrome c6 and cytochrome f) at the step of heme attachment. This is Cytochrome c biogenesis protein Ccs1 from Rhodomonas salina (Cryptomonas salina).